The primary structure comprises 189 residues: Cancer/testis antigen family 45 member A2 (189 aa).

It belongs to the CT45 family. In terms of tissue distribution, testis specific. Expressed in cancer cell lines.

The sequence is that of Cancer/testis antigen family 45 member A2 from Homo sapiens (Human).